Reading from the N-terminus, the 700-residue chain is Elongation factor G (700 aa).

The tr-type G domain maps to 10-286 (KKVRNIGIMA…AVIDYLPSPL (277 aa)). GTP is bound by residues 19–26 (AHIDAGKT), 83–87 (DTPGH), and 137–140 (NKMD).

This sequence belongs to the TRAFAC class translation factor GTPase superfamily. Classic translation factor GTPase family. EF-G/EF-2 subfamily.

The protein resides in the cytoplasm. Its function is as follows. Catalyzes the GTP-dependent ribosomal translocation step during translation elongation. During this step, the ribosome changes from the pre-translocational (PRE) to the post-translocational (POST) state as the newly formed A-site-bound peptidyl-tRNA and P-site-bound deacylated tRNA move to the P and E sites, respectively. Catalyzes the coordinated movement of the two tRNA molecules, the mRNA and conformational changes in the ribosome. This is Elongation factor G from Nocardia farcinica (strain IFM 10152).